The following is a 218-amino-acid chain: uncharacterized protein (218 aa).

The 83-residue stretch at 111–193 (NSIYLVEGDF…ITKVIEIKAA (83 aa)) folds into the Toprim domain.

This is an uncharacterized protein from Mycoplasma genitalium (strain ATCC 33530 / DSM 19775 / NCTC 10195 / G37) (Mycoplasmoides genitalium).